Reading from the N-terminus, the 279-residue chain is Tumor protein p63-regulated gene 1 protein (279 aa).

The tract at residues 1 to 49 is disordered; the sequence is MSTIGSFDGFQPVSLKQEEEDQPSENDHLSTKEGNSGKDPGSRRISRQQ. Positions 72 to 259 constitute a hSac2 domain; the sequence is VTRPGAIETA…ILIETYTGLM (188 aa).

The protein belongs to the TPRG1 family. In terms of tissue distribution, highly expressed in skin. Also detected at low levels in tongue and esophagus.

Its subcellular location is the cytoplasm. This Mus musculus (Mouse) protein is Tumor protein p63-regulated gene 1 protein.